The sequence spans 338 residues: Ketol-acid reductoisomerase (NADP(+)) (338 aa).

A KARI N-terminal Rossmann domain is found at 1–181 (MKVFYDKDAD…GGGRAGIIET (181 aa)). NADP(+) is bound by residues 24–27 (YGSQ), Arg-47, and Ser-52. His-107 is an active-site residue. Gly-133 contributes to the NADP(+) binding site. The region spanning 182–327 (NFREETETDL…AKLRAMMPWI (146 aa)) is the KARI C-terminal knotted domain. The Mg(2+) site is built by Asp-190, Glu-194, Glu-226, and Glu-230. Ser-251 lines the substrate pocket.

It belongs to the ketol-acid reductoisomerase family. It depends on Mg(2+) as a cofactor.

It carries out the reaction (2R)-2,3-dihydroxy-3-methylbutanoate + NADP(+) = (2S)-2-acetolactate + NADPH + H(+). It catalyses the reaction (2R,3R)-2,3-dihydroxy-3-methylpentanoate + NADP(+) = (S)-2-ethyl-2-hydroxy-3-oxobutanoate + NADPH + H(+). It functions in the pathway amino-acid biosynthesis; L-isoleucine biosynthesis; L-isoleucine from 2-oxobutanoate: step 2/4. Its pathway is amino-acid biosynthesis; L-valine biosynthesis; L-valine from pyruvate: step 2/4. Involved in the biosynthesis of branched-chain amino acids (BCAA). Catalyzes an alkyl-migration followed by a ketol-acid reduction of (S)-2-acetolactate (S2AL) to yield (R)-2,3-dihydroxy-isovalerate. In the isomerase reaction, S2AL is rearranged via a Mg-dependent methyl migration to produce 3-hydroxy-3-methyl-2-ketobutyrate (HMKB). In the reductase reaction, this 2-ketoacid undergoes a metal-dependent reduction by NADPH to yield (R)-2,3-dihydroxy-isovalerate. This is Ketol-acid reductoisomerase (NADP(+)) from Ralstonia pickettii (strain 12J).